We begin with the raw amino-acid sequence, 481 residues long: ATP synthase subunit beta, chloroplastic (481 aa).

Position 163–170 (163–170 (GGAGVGKT)) interacts with ATP.

This sequence belongs to the ATPase alpha/beta chains family. As to quaternary structure, F-type ATPases have 2 components, CF(1) - the catalytic core - and CF(0) - the membrane proton channel. CF(1) has five subunits: alpha(3), beta(3), gamma(1), delta(1), epsilon(1). CF(0) has four main subunits: a(1), b(1), b'(1) and c(9-12).

It is found in the plastid. The protein localises to the chloroplast thylakoid membrane. The catalysed reaction is ATP + H2O + 4 H(+)(in) = ADP + phosphate + 5 H(+)(out). Its function is as follows. Produces ATP from ADP in the presence of a proton gradient across the membrane. The catalytic sites are hosted primarily by the beta subunits. The chain is ATP synthase subunit beta, chloroplastic from Tupiella akineta (Green alga).